The primary structure comprises 236 residues: tRNA (guanine-N(7)-)-methyltransferase (236 aa).

S-adenosyl-L-methionine-binding residues include Glu-43, Asp-68, Asn-102, and Asn-125. Residues Lys-129 and Asp-161 each coordinate substrate.

Belongs to the class I-like SAM-binding methyltransferase superfamily. TrmB family.

The catalysed reaction is guanosine(46) in tRNA + S-adenosyl-L-methionine = N(7)-methylguanosine(46) in tRNA + S-adenosyl-L-homocysteine. The protein operates within tRNA modification; N(7)-methylguanine-tRNA biosynthesis. In terms of biological role, catalyzes the formation of N(7)-methylguanine at position 46 (m7G46) in tRNA. This Ruminiclostridium cellulolyticum (strain ATCC 35319 / DSM 5812 / JCM 6584 / H10) (Clostridium cellulolyticum) protein is tRNA (guanine-N(7)-)-methyltransferase.